The sequence spans 90 residues: Cluster 41 protein AFLA_114800 (90 aa).

The chain crosses the membrane as a helical span at residues 55–77 (GLLLLCCFYPIGNLILLVRLSLV). Asn80 carries an N-linked (GlcNAc...) asparagine glycan.

The protein localises to the membrane. Cluster 41 protein; part of the gene cluster 41 that mediates the biosynthesis of an extracellular and diffusible metabolite that is able to stimulate colony sclerotial production. The protein is Cluster 41 protein AFLA_114800 of Aspergillus flavus (strain ATCC 200026 / FGSC A1120 / IAM 13836 / NRRL 3357 / JCM 12722 / SRRC 167).